Here is a 314-residue protein sequence, read N- to C-terminus: L-lactate dehydrogenase 1 (314 aa).

NAD(+)-binding positions include valine 16, aspartate 37, lysine 42, tyrosine 68, and 82 to 83 (GL). Substrate contacts are provided by residues glutamine 85, arginine 91, and 123–126 (NPVD). NAD(+) contacts are provided by residues 121–123 (ATN) and serine 146. Position 151–154 (151–154 (DSAR)) interacts with substrate. Beta-D-fructose 1,6-bisphosphate is bound by residues arginine 156 and histidine 171. Residue histidine 178 is the Proton acceptor of the active site. Phosphotyrosine is present on tyrosine 223. Threonine 232 contacts substrate.

It belongs to the LDH/MDH superfamily. LDH family. Homotetramer.

Its subcellular location is the cytoplasm. It carries out the reaction (S)-lactate + NAD(+) = pyruvate + NADH + H(+). It functions in the pathway fermentation; pyruvate fermentation to lactate; (S)-lactate from pyruvate: step 1/1. With respect to regulation, allosterically activated by fructose 1,6-bisphosphate (FBP). In terms of biological role, catalyzes the conversion of lactate to pyruvate. The chain is L-lactate dehydrogenase 1 from Bacillus cereus (strain ATCC 14579 / DSM 31 / CCUG 7414 / JCM 2152 / NBRC 15305 / NCIMB 9373 / NCTC 2599 / NRRL B-3711).